A 620-amino-acid polypeptide reads, in one-letter code: Methionine--tRNA ligase (620 aa).

The 'HIGH' region signature appears at 11-21 (PYANGPRHIGH). Zn(2+)-binding residues include Cys-143, Cys-146, Cys-156, and Cys-159. Positions 347–351 (KFSSS) match the 'KMSKS' region motif. Position 350 (Ser-350) interacts with ATP.

This sequence belongs to the class-I aminoacyl-tRNA synthetase family. MetG type 1 subfamily. Monomer. Zn(2+) is required as a cofactor.

It localises to the cytoplasm. It catalyses the reaction tRNA(Met) + L-methionine + ATP = L-methionyl-tRNA(Met) + AMP + diphosphate. In terms of biological role, is required not only for elongation of protein synthesis but also for the initiation of all mRNA translation through initiator tRNA(fMet) aminoacylation. The protein is Methionine--tRNA ligase of Bifidobacterium adolescentis (strain ATCC 15703 / DSM 20083 / NCTC 11814 / E194a).